The primary structure comprises 24 residues: Alpha-lactalbumin (24 aa).

The protein belongs to the glycosyl hydrolase 22 family. In terms of assembly, lactose synthase (LS) is a heterodimer of a catalytic component, beta1,4-galactosyltransferase (beta4Gal-T1) and a regulatory component, alpha-lactalbumin (LA). Glycosylated (50% of the proteins). In terms of tissue distribution, mammary gland specific. Secreted in milk.

It is found in the secreted. In terms of biological role, regulatory subunit of lactose synthase, changes the substrate specificity of galactosyltransferase in the mammary gland making glucose a good acceptor substrate for this enzyme. This enables LS to synthesize lactose, the major carbohydrate component of milk. In other tissues, galactosyltransferase transfers galactose onto the N-acetylglucosamine of the oligosaccharide chains in glycoproteins. This Felis catus (Cat) protein is Alpha-lactalbumin (LALBA).